The chain runs to 335 residues: Serine protease 42 (335 aa).

An N-terminal signal peptide occupies residues 1–24; that stretch reads MASGGGSLGLIVFLLLLQPKPCEA. Asparagine 67 carries N-linked (GlcNAc...) asparagine glycosylation. Residues 79 to 315 form the Peptidase S1 domain; sequence IMGGVDAEEG…YSKWLIAVVN (237 aa). A disulfide bond links cysteine 104 and cysteine 120. Histidine 119 acts as the Charge relay system in catalysis. N-linked (GlcNAc...) asparagine glycosylation is present at asparagine 140. Aspartate 165 functions as the Charge relay system in the catalytic mechanism. A glycan (N-linked (GlcNAc...) asparagine) is linked at asparagine 176. 3 disulfides stabilise this stretch: cysteine 199-cysteine 273, cysteine 232-cysteine 253, and cysteine 263-cysteine 291. Catalysis depends on serine 267, which acts as the Charge relay system.

Belongs to the peptidase S1 family. In terms of tissue distribution, testis-specific. Mainly detected in round spermatids at all the eminiferous epithelial stages (at protein level).

The protein resides in the cytoplasm. The protein localises to the cell membrane. Functionally, plays a role in spermatogenesis. Involved in germ cell survival during meiosis. Lacks protease activity in vitro. The protein is Serine protease 42 of Mus musculus (Mouse).